Here is a 473-residue protein sequence, read N- to C-terminus: Inactive levansucrase (473 aa).

Positions 1 to 29 are cleaved as a signal peptide; it reads MNIKKFAKQATVLTFTTALLAGGATQAFA.

Belongs to the glycosyl hydrolase 68 family.

The protein resides in the secreted. This is Inactive levansucrase (sacB) from Geobacillus stearothermophilus (Bacillus stearothermophilus).